Here is a 154-residue protein sequence, read N- to C-terminus: uncharacterized protein (154 aa).

The next 4 helical transmembrane spans lie at 20-42 (FRLF…GQFG), 62-84 (FFGY…AVLL), 91-109 (ALGA…LINY), and 113-132 (IGVQ…LLWM).

Its subcellular location is the cell membrane. This is an uncharacterized protein from Bacillus subtilis (strain 168).